Consider the following 403-residue polypeptide: MSGRVGDLSPRQKEALAKFRENVQDVLPALPNPDDYFLLRWLRARSFDLQKSEAMLRKHVEFRKQKDIDNIISWQPPEVIQQYLSGGMCGYDLDGCPVWYDIIGPLDAKGLLFSASKQDLLRTKMRECELLLQECAHQTTKLGRKVETITIIYDCEGLGLKHLWKPAVEAYGEFLCMFEENYPETLKRLFVVKAPKLFPVAYNLIKPFLSEDTRKKIMVLGANWKEVLLKHISPDQVPVEYGGTMTDPDGNPKCKSKINYGGDIPRKYYVRDQVKQQYEHSVQISRGSSHQVEYEILFPGCVLRWQFMSDGADVGFGIFLKTKMGERQRAGEMTEVLPNQRYNSHLVPEDGTLTCSDPGIYVLRFDNTYSFIHAKKVNFTVEVLLPDKASEEKMKQLGAGTPK.

Lys-51 is subject to N6-succinyllysine. The CRAL-TRIO domain maps to 76–249 (PPEVIQQYLS…EYGGTMTDPD (174 aa)). N6-succinyllysine occurs at positions 253 and 257. In terms of domain architecture, GOLD spans 275-383 (KQQYEHSVQI…AKKVNFTVEV (109 aa)). The residue at position 393 (Lys-393) is an N6-succinyllysine.

As to quaternary structure, monomer. As to expression, widely expressed. Strong expression in liver, brain and prostate.

It is found in the cytoplasm. It localises to the nucleus. Functionally, carrier protein. Binds to some hydrophobic molecules and promotes their transfer between the different cellular sites. Binds with high affinity to alpha-tocopherol. Also binds with a weaker affinity to other tocopherols and to tocotrienols. May have a transcriptional activatory activity via its association with alpha-tocopherol. Probably recognizes and binds some squalene structure, suggesting that it may regulate cholesterol biosynthesis by increasing the transfer of squalene to a metabolic active pool in the cell. This is SEC14-like protein 2 (SEC14L2) from Homo sapiens (Human).